Reading from the N-terminus, the 233-residue chain is Eukaryotic translation initiation factor 3 subunit G (233 aa).

In terms of domain architecture, RRM spans 152–229 (PSIMVSNLSQ…LVLSLEFAKK (78 aa)).

This sequence belongs to the eIF-3 subunit G family. As to quaternary structure, component of the eukaryotic translation initiation factor 3 (eIF-3) complex.

The protein localises to the cytoplasm. Its function is as follows. RNA-binding component of the eukaryotic translation initiation factor 3 (eIF-3) complex, which is involved in protein synthesis of a specialized repertoire of mRNAs and, together with other initiation factors, stimulates binding of mRNA and methionyl-tRNAi to the 40S ribosome. The eIF-3 complex specifically targets and initiates translation of a subset of mRNAs involved in cell proliferation. This subunit can bind 18S rRNA. The protein is Eukaryotic translation initiation factor 3 subunit G (eif3G) of Dictyostelium discoideum (Social amoeba).